The following is a 314-amino-acid chain: Methionyl-tRNA formyltransferase (314 aa).

111-114 (SLLP) provides a ligand contact to (6S)-5,6,7,8-tetrahydrofolate.

This sequence belongs to the Fmt family.

The catalysed reaction is L-methionyl-tRNA(fMet) + (6R)-10-formyltetrahydrofolate = N-formyl-L-methionyl-tRNA(fMet) + (6S)-5,6,7,8-tetrahydrofolate + H(+). Attaches a formyl group to the free amino group of methionyl-tRNA(fMet). The formyl group appears to play a dual role in the initiator identity of N-formylmethionyl-tRNA by promoting its recognition by IF2 and preventing the misappropriation of this tRNA by the elongation apparatus. The protein is Methionyl-tRNA formyltransferase of Coxiella burnetii (strain CbuK_Q154) (Coxiella burnetii (strain Q154)).